The following is a 511-amino-acid chain: Gap junction alpha-3 protein (511 aa).

Residues 2–15 lie within the membrane without spanning it; the sequence is GDWSFLGRLLENAQ. Residues 16–19 lie on the Cytoplasmic side of the membrane; the sequence is EHST. The helical transmembrane segment at 20–40 threads the bilayer; that stretch reads VIGKVWLTVLFIFRILVLGAA. At 41–71 the chain is on the extracellular side; the sequence is AEEVWGDEQSDFTCNTQQPGCENVCYDKAFP. 3 cysteine pairs are disulfide-bonded: cysteine 54-cysteine 214, cysteine 61-cysteine 208, and cysteine 65-cysteine 203. A helical membrane pass occupies residues 72 to 92; the sequence is ISHIRFWVLQIIFVSTPTLIY. The Cytoplasmic portion of the chain corresponds to 93–174; sequence LGHVLHIVRM…GALLRTYIFN (82 aa). Positions 110–119 are enriched in basic and acidic residues; the sequence is EEELKKRGSV. Positions 110–143 are disordered; the sequence is EEELKKRGSVKDNNYPGAATSGGGSGGGNNFKDP. Gly residues predominate over residues 129 to 138; it reads TSGGGSGGGN. The chain crosses the membrane as a helical span at residues 175–195; it reads IIFKTLFEVGFIVGQYFLYGF. At 196-223 the chain is on the extracellular side; the sequence is ELKPVYQCSRPPCPHTVDCFISRPTEKT. The helical transmembrane segment at 224-244 threads the bilayer; sequence IFIIFMLVVASVSLLLNMLEI. The Cytoplasmic portion of the chain corresponds to 245–511; the sequence is YHLGWKKLKQ…SRARSDDLAV (267 aa). Residues 397 to 511 form a disordered region; the sequence is AEQQGKAPSS…SRARSDDLAV (115 aa). 2 stretches are compositionally biased toward low complexity: residues 403 to 415 and 440 to 456; these read APSS…TPSS and TTTN…ASGS.

It belongs to the connexin family. As to quaternary structure, a hemichannel or connexon is composed of a hexamer of connexins. A functional gap junction is formed by the apposition of two hemichannels. During early stages of lens development, interacts with the C-terminus of MIP. In terms of tissue distribution, detected in eye lens.

It is found in the cell membrane. It localises to the cell junction. The protein localises to the gap junction. Its function is as follows. Structural component of lens fiber gap junctions. Gap junctions are dodecameric channels that connect the cytoplasm of adjoining cells. They are formed by the docking of two hexameric hemichannels, one from each cell membrane. Small molecules and ions diffuse from one cell to a neighboring cell via the central pore. The protein is Gap junction alpha-3 protein (GJA3) of Gallus gallus (Chicken).